The chain runs to 141 residues: UPF0310 protein SSA_0254 (141 aa).

This sequence belongs to the UPF0310 family.

In Streptococcus sanguinis (strain SK36), this protein is UPF0310 protein SSA_0254.